Here is a 192-residue protein sequence, read N- to C-terminus: Beta-glucosidase (192 aa).

Belongs to the glycosyl hydrolase 3 family.

It catalyses the reaction Hydrolysis of terminal, non-reducing beta-D-glucosyl residues with release of beta-D-glucose.. It participates in glycan metabolism; cellulose degradation. This is Beta-glucosidase from Schizophyllum commune (Split gill fungus).